A 280-amino-acid chain; its full sequence is Thymidylate synthase (280 aa).

A dUMP-binding site is contributed by Arg-21. His-51 lines the (6R)-5,10-methylene-5,6,7,8-tetrahydrofolate pocket. 142–143 serves as a coordination point for dUMP; the sequence is RR. Cys-162 serves as the catalytic Nucleophile. DUMP-binding positions include 182-185, Asn-193, and 223-225; these read RSAD and HLY. Residue Asp-185 coordinates (6R)-5,10-methylene-5,6,7,8-tetrahydrofolate. Ala-279 serves as a coordination point for (6R)-5,10-methylene-5,6,7,8-tetrahydrofolate.

The protein belongs to the thymidylate synthase family. Bacterial-type ThyA subfamily. Homodimer.

It localises to the cytoplasm. The catalysed reaction is dUMP + (6R)-5,10-methylene-5,6,7,8-tetrahydrofolate = 7,8-dihydrofolate + dTMP. Its pathway is pyrimidine metabolism; dTTP biosynthesis. Catalyzes the reductive methylation of 2'-deoxyuridine-5'-monophosphate (dUMP) to 2'-deoxythymidine-5'-monophosphate (dTMP) while utilizing 5,10-methylenetetrahydrofolate (mTHF) as the methyl donor and reductant in the reaction, yielding dihydrofolate (DHF) as a by-product. This enzymatic reaction provides an intracellular de novo source of dTMP, an essential precursor for DNA biosynthesis. The chain is Thymidylate synthase from Acinetobacter baylyi (strain ATCC 33305 / BD413 / ADP1).